Reading from the N-terminus, the 366-residue chain is NAD(P)H-quinone oxidoreductase subunit 1, chloroplastic (366 aa).

7 consecutive transmembrane segments (helical) span residues 28–48, 105–125, 128–148, 250–270, 271–291, 303–323, and 346–366; these read IWLL…VLVI, IAVI…HLVL, LSIG…GLLM, SGIK…VSSL, FVTV…FIFI, IFGM…FLFI, and FLLP…LLSL.

Belongs to the complex I subunit 1 family. NDH is composed of at least 16 different subunits, 5 of which are encoded in the nucleus.

The protein localises to the plastid. Its subcellular location is the chloroplast thylakoid membrane. The catalysed reaction is a plastoquinone + NADH + (n+1) H(+)(in) = a plastoquinol + NAD(+) + n H(+)(out). It catalyses the reaction a plastoquinone + NADPH + (n+1) H(+)(in) = a plastoquinol + NADP(+) + n H(+)(out). Its function is as follows. NDH shuttles electrons from NAD(P)H:plastoquinone, via FMN and iron-sulfur (Fe-S) centers, to quinones in the photosynthetic chain and possibly in a chloroplast respiratory chain. The immediate electron acceptor for the enzyme in this species is believed to be plastoquinone. Couples the redox reaction to proton translocation, and thus conserves the redox energy in a proton gradient. The polypeptide is NAD(P)H-quinone oxidoreductase subunit 1, chloroplastic (Nandina domestica (Heavenly bamboo)).